A 297-amino-acid polypeptide reads, in one-letter code: Acetyl-coenzyme A carboxylase carboxyl transferase subunit beta (297 aa).

The tract at residues 1–23 (MSWIERILGRTSSSSSSSKSKVP) is disordered. In terms of domain architecture, CoA carboxyltransferase N-terminal spans 26–295 (VWTKCTSCEQ…PFKTAELIVE (270 aa)). 4 residues coordinate Zn(2+): Cys-30, Cys-33, Cys-49, and Cys-52. A C4-type zinc finger spans residues 30–52 (CTSCEQVLYSEELKRNMHVCPKC).

Belongs to the AccD/PCCB family. Acetyl-CoA carboxylase is a heterohexamer composed of biotin carboxyl carrier protein (AccB), biotin carboxylase (AccC) and two subunits each of ACCase subunit alpha (AccA) and ACCase subunit beta (AccD). It depends on Zn(2+) as a cofactor.

The protein resides in the cytoplasm. The enzyme catalyses N(6)-carboxybiotinyl-L-lysyl-[protein] + acetyl-CoA = N(6)-biotinyl-L-lysyl-[protein] + malonyl-CoA. It participates in lipid metabolism; malonyl-CoA biosynthesis; malonyl-CoA from acetyl-CoA: step 1/1. Component of the acetyl coenzyme A carboxylase (ACC) complex. Biotin carboxylase (BC) catalyzes the carboxylation of biotin on its carrier protein (BCCP) and then the CO(2) group is transferred by the transcarboxylase to acetyl-CoA to form malonyl-CoA. This chain is Acetyl-coenzyme A carboxylase carboxyl transferase subunit beta, found in Actinobacillus pleuropneumoniae serotype 5b (strain L20).